The sequence spans 284 residues: 4-hydroxybenzoate octaprenyltransferase (284 aa).

The next 8 helical transmembrane spans lie at 14-34, 41-61, 93-113, 134-154, 166-186, 209-229, 233-253, and 262-282; these read VHQP…LWIT, FIVL…GCVI, WVFF…NNII, YIYL…LIVY, WLLF…YAMV, IVIG…GIVE, IIFY…QQVL, and CLWA…GIVL.

It belongs to the UbiA prenyltransferase family. The cofactor is Mg(2+).

It localises to the cell inner membrane. It carries out the reaction all-trans-octaprenyl diphosphate + 4-hydroxybenzoate = 4-hydroxy-3-(all-trans-octaprenyl)benzoate + diphosphate. It functions in the pathway cofactor biosynthesis; ubiquinone biosynthesis. Functionally, catalyzes the prenylation of para-hydroxybenzoate (PHB) with an all-trans polyprenyl group. Mediates the second step in the final reaction sequence of ubiquinone-8 (UQ-8) biosynthesis, which is the condensation of the polyisoprenoid side chain with PHB, generating the first membrane-bound Q intermediate 3-octaprenyl-4-hydroxybenzoate. This is 4-hydroxybenzoate octaprenyltransferase from Blochmanniella floridana.